A 992-amino-acid polypeptide reads, in one-letter code: Aminopeptidase Q (992 aa).

Over 2–13 (GPPSSSGFYVSR) the chain is Cytoplasmic. Residues 14-34 (AVALLLAALAAALLLALAVLA) form a helical; Signal-anchor for type II membrane protein membrane-spanning segment. At 35–992 (ALYGRCARVQ…RMTAWLRKNT (958 aa)) the chain is on the extracellular side. The tract at residues 47 to 92 (DLHHSGVPDAASSPRGTQEEPLPTWPPRPTREPAGTATPGHWRPPG) is disordered. Residue N133 is glycosylated (N-linked (GlcNAc...) asparagine). E241 provides a ligand contact to substrate. N-linked (GlcNAc...) asparagine glycans are attached at residues N262, N289, N347, and N361. 380-384 (SAMEN) lines the substrate pocket. H416 is a Zn(2+) binding site. Residue E417 is the Proton acceptor of the active site. Zn(2+) is bound by residues H420 and E439. The active-site Proton donor is the Y505. 8 N-linked (GlcNAc...) asparagine glycosylation sites follow: N555, N584, N602, N609, N655, N811, N850, and N889.

This sequence belongs to the peptidase M1 family. Requires Zn(2+) as cofactor. In terms of tissue distribution, expressed in skin. Expression levels do not differ between dark and light skin areas.

The protein resides in the membrane. Metalloprotease which may be important for placentation by regulating biological activity of key peptides at the embryo-maternal interface. Involved in coat pigmentation patterns. During skin development, may be required to establish the periodicity of tabby markings, initiating a pre-pattern at or before hair follicle development. In Felis catus (Cat), this protein is Aminopeptidase Q (LVRN).